The sequence spans 31 residues: Photosystem II reaction center protein T (31 aa).

A helical membrane pass occupies residues 3 to 23 (ALVYTFLLVGTLGIIFFSIFF).

Belongs to the PsbT family. PSII is composed of 1 copy each of membrane proteins PsbA, PsbB, PsbC, PsbD, PsbE, PsbF, PsbH, PsbI, PsbJ, PsbK, PsbL, PsbM, PsbT, PsbY, PsbZ, Psb30/Ycf12, at least 3 peripheral proteins of the oxygen-evolving complex and a large number of cofactors. It forms dimeric complexes.

The protein localises to the plastid. Its subcellular location is the chloroplast thylakoid membrane. Its function is as follows. Found at the monomer-monomer interface of the photosystem II (PS II) dimer, plays a role in assembly and dimerization of PSII. PSII is a light-driven water plastoquinone oxidoreductase, using light energy to abstract electrons from H(2)O, generating a proton gradient subsequently used for ATP formation. In Chlamydomonas reinhardtii (Chlamydomonas smithii), this protein is Photosystem II reaction center protein T.